Here is a 235-residue protein sequence, read N- to C-terminus: Enolase-phosphatase E1 (235 aa).

Belongs to the HAD-like hydrolase superfamily. MasA/MtnC family. In terms of assembly, monomer. It depends on Mg(2+) as a cofactor.

It catalyses the reaction 5-methylsulfanyl-2,3-dioxopentyl phosphate + H2O = 1,2-dihydroxy-5-(methylsulfanyl)pent-1-en-3-one + phosphate. It functions in the pathway amino-acid biosynthesis; L-methionine biosynthesis via salvage pathway; L-methionine from S-methyl-5-thio-alpha-D-ribose 1-phosphate: step 3/6. It participates in amino-acid biosynthesis; L-methionine biosynthesis via salvage pathway; L-methionine from S-methyl-5-thio-alpha-D-ribose 1-phosphate: step 4/6. Bifunctional enzyme that catalyzes the enolization of 2,3-diketo-5-methylthiopentyl-1-phosphate (DK-MTP-1-P) into the intermediate 2-hydroxy-3-keto-5-methylthiopentenyl-1-phosphate (HK-MTPenyl-1-P), which is then dephosphorylated to form the acireductone 1,2-dihydroxy-3-keto-5-methylthiopentene (DHK-MTPene). This is Enolase-phosphatase E1 from Gluconacetobacter diazotrophicus (strain ATCC 49037 / DSM 5601 / CCUG 37298 / CIP 103539 / LMG 7603 / PAl5).